A 471-amino-acid chain; its full sequence is E3 ubiquitin-protein ligase TRIM38 (471 aa).

Residues 16–62 (CSICKAMMSHPVSINCGHSYCKSCIQSYYCNVSPKTGWKMLGCPLCS) form an RING-type zinc finger. The segment at 90–131 (DQDMVCEEHEEKFNRFCEDDGQLLCWRCYWEDRHKGHTLAHV) adopts a B box-type zinc-finger fold. Zn(2+)-binding residues include cysteine 95, histidine 98, cysteine 117, and histidine 123. The B30.2/SPRY domain occupies 276 to 471 (CNVSELYFDV…PLFLPAINNQ (196 aa)).

In terms of assembly, interacts (via B30.2/SPRY domain) with TAB2 and TAB3.

Its subcellular location is the cytoplasm. The catalysed reaction is S-ubiquitinyl-[E2 ubiquitin-conjugating enzyme]-L-cysteine + [acceptor protein]-L-lysine = [E2 ubiquitin-conjugating enzyme]-L-cysteine + N(6)-ubiquitinyl-[acceptor protein]-L-lysine.. The protein operates within protein modification; protein ubiquitination. It participates in protein modification; protein sumoylation. Functionally, E3 ubiquitin-protein and E3 SUMO-protein ligase that acts as a regulator of innate immunity. Acts as a negative regulator of type I interferon IFN-beta production by catalyzing 'Lys-48'-linked polyubiquitination of AZI2/NAP1, leading to its degradation. Mediates 'Lys-48'-linked polyubiquitination and proteasomal degradation of the critical TLR adapter TICAM1, inhibiting TLR3-mediated type I interferon signaling. Acts as a positive regulator of the cGAS-STING pathway by acting as a E3 SUMO-protein ligase: mediates sumoylation of CGAS and STING, preventing their degradation and thereby activating the innate immune response to DNA virus. Also acts as a negative regulator of NF-kappa-B signaling independently of its E3 protein ligase activity by promoting lysosome-dependent degradation of TAB2 and TAB3 adapters. The protein is E3 ubiquitin-protein ligase TRIM38 of Mus musculus (Mouse).